Reading from the N-terminus, the 212-residue chain is External core antigen (212 aa).

Residues 1–19 form the signal peptide; sequence MQLFHLCLIISCSCPTVQA. Residues 25 to 27 are HBEAG; the sequence is GWL. A disordered region spans residues 179-212; sequence RQRGRTIRRRTPSPRRRRSQSPRRRRSQSRESQC. Basic residues predominate over residues 180 to 205; it reads QRGRTIRRRTPSPRRRRSQSPRRRRS. A 1; half-length repeat occupies 184-190; it reads TIRRRTP. The 3 X 8 AA repeats of S-P-R-R-R-R-S-Q stretch occupies residues 184 to 206; the sequence is TIRRRTPSPRRRRSQSPRRRRSQ. Residues 184-212 constitute a propeptide that is removed on maturation; sequence TIRRRTPSPRRRRSQSPRRRRSQSRESQC. 2 consecutive repeat copies span residues 191 to 198 and 199 to 206.

The protein belongs to the orthohepadnavirus precore antigen family. In terms of assembly, homodimerizes. Phosphorylated. In terms of processing, cleaved by host furin.

The protein localises to the secreted. The protein resides in the host nucleus. In terms of biological role, may regulate immune response to the intracellular capsid in acting as a T-cell tolerogen, by having an immunoregulatory effect which prevents destruction of infected cells by cytotoxic T-cells. This immune regulation may predispose to chronicity during perinatal infections and prevent severe liver injury during adult infections. In Hepatitis B virus genotype D subtype ayw (isolate Australia/AustKW/1991) (HBV-D), this protein is External core antigen.